A 453-amino-acid chain; its full sequence is tRNA modification GTPase MnmE (453 aa).

(6S)-5-formyl-5,6,7,8-tetrahydrofolate-binding residues include arginine 22, glutamate 79, and lysine 119. Positions 215-376 (GMKVVIAGRP…LRNHLKECMG (162 aa)) constitute a TrmE-type G domain. Residue asparagine 225 participates in K(+) binding. Residues 225-230 (NAGKSS), 244-250 (TDIAGTT), 269-272 (DTAG), and 334-337 (NKAD) each bind GTP. Serine 229 is a binding site for Mg(2+). Positions 244, 246, and 249 each coordinate K(+). Threonine 250 provides a ligand contact to Mg(2+). Lysine 453 contributes to the (6S)-5-formyl-5,6,7,8-tetrahydrofolate binding site.

This sequence belongs to the TRAFAC class TrmE-Era-EngA-EngB-Septin-like GTPase superfamily. TrmE GTPase family. Homodimer. Heterotetramer of two MnmE and two MnmG subunits. K(+) is required as a cofactor.

It localises to the cytoplasm. Exhibits a very high intrinsic GTPase hydrolysis rate. Involved in the addition of a carboxymethylaminomethyl (cmnm) group at the wobble position (U34) of certain tRNAs, forming tRNA-cmnm(5)s(2)U34. The protein is tRNA modification GTPase MnmE of Vibrio parahaemolyticus serotype O3:K6 (strain RIMD 2210633).